Consider the following 177-residue polypeptide: Large ribosomal subunit protein uL6 (177 aa).

This sequence belongs to the universal ribosomal protein uL6 family. Part of the 50S ribosomal subunit.

In terms of biological role, this protein binds to the 23S rRNA, and is important in its secondary structure. It is located near the subunit interface in the base of the L7/L12 stalk, and near the tRNA binding site of the peptidyltransferase center. The chain is Large ribosomal subunit protein uL6 from Rhodospirillum centenum (strain ATCC 51521 / SW).